The following is a 543-amino-acid chain: Zinc finger CCCH-type with G patch domain-containing protein (543 aa).

Disordered stretches follow at residues Ala55–Ile79 and Thr95–Asp132. Over residues Asp65–Asp76 the composition is skewed to low complexity. The segment covering Asp118–Leu131 has biased composition (acidic residues). The segment at Pro186–Val209 adopts a C3H1-type zinc-finger fold. Positions Pro272–Ala304 are disordered. Acidic residues predominate over residues Leu277 to Ala304. Residues Thr335–Glu381 enclose the G-patch domain. The segment at Gly438–Leu460 is disordered.

It is found in the nucleus. Its function is as follows. Transcription repressor. The protein is Zinc finger CCCH-type with G patch domain-containing protein of Anopheles gambiae (African malaria mosquito).